A 388-amino-acid chain; its full sequence is S-adenosylmethionine synthase (388 aa).

H16 provides a ligand contact to ATP. D18 contributes to the Mg(2+) binding site. K(+) is bound at residue E44. Positions 57 and 100 each coordinate L-methionine. Residues 100 to 110 (QSPEIAQGVDR) are flexible loop. Residues 165 to 167 (DAK), 231 to 232 (KF), D240, 246 to 247 (RK), A263, and K267 contribute to the ATP site. An L-methionine-binding site is contributed by D240. K271 is an L-methionine binding site.

This sequence belongs to the AdoMet synthase family. As to quaternary structure, homotetramer; dimer of dimers. It depends on Mg(2+) as a cofactor. K(+) is required as a cofactor.

It is found in the cytoplasm. It catalyses the reaction L-methionine + ATP + H2O = S-adenosyl-L-methionine + phosphate + diphosphate. It functions in the pathway amino-acid biosynthesis; S-adenosyl-L-methionine biosynthesis; S-adenosyl-L-methionine from L-methionine: step 1/1. Functionally, catalyzes the formation of S-adenosylmethionine (AdoMet) from methionine and ATP. The overall synthetic reaction is composed of two sequential steps, AdoMet formation and the subsequent tripolyphosphate hydrolysis which occurs prior to release of AdoMet from the enzyme. The polypeptide is S-adenosylmethionine synthase (Psychrobacter arcticus (strain DSM 17307 / VKM B-2377 / 273-4)).